A 118-amino-acid polypeptide reads, in one-letter code: Basic phospholipase A2 CM-III (118 aa).

7 disulfide bridges follow: cysteine 11–cysteine 70, cysteine 26–cysteine 117, cysteine 28–cysteine 44, cysteine 43–cysteine 98, cysteine 50–cysteine 91, cysteine 59–cysteine 84, and cysteine 77–cysteine 89. Ca(2+) contacts are provided by tyrosine 27, glycine 29, and glycine 31. The active site involves histidine 47. Aspartate 48 contributes to the Ca(2+) binding site. The short motif at 52-69 (EKAGKMGCWPYFTLYKYK) is the Coagulation factor Xa binding motif element. The active site involves aspartate 92.

This sequence belongs to the phospholipase A2 family. Group I subfamily. D49 sub-subfamily. Requires Ca(2+) as cofactor. As to expression, expressed by the venom gland.

It localises to the secreted. The enzyme catalyses a 1,2-diacyl-sn-glycero-3-phosphocholine + H2O = a 1-acyl-sn-glycero-3-phosphocholine + a fatty acid + H(+). Its function is as follows. Snake venom phospholipase A2 (PLA2) that shows several activities. It shows strong anticoagulant activity, probably by binding to coagulation factor Xa (F10) and inhibiting the formation of the prothrombinase complex, shows direct hemolytic action, causes neuromuscular blockade with a gradual contracture and a decreased sensitivity to ACh and KCl, abolishes twitches evoked by indirect stimulation earlier than those by direct stimulation (in the mouse phrenic nerve-diaphragm preparation), and causes myonecrosis when injected intramuscularly. PLA2 catalyzes the calcium-dependent hydrolysis of the 2-acyl groups in 3-sn-phosphoglycerides. The sequence is that of Basic phospholipase A2 CM-III from Naja mossambica (Mozambique spitting cobra).